The primary structure comprises 238 residues: Uridylate kinase (238 aa).

An ATP-binding site is contributed by 10–13; sequence KFSG. The segment at 18-23 is involved in allosteric activation by GTP; it reads GDSGFG. Gly52 contacts UMP. Positions 53 and 57 each coordinate ATP. UMP contacts are provided by residues Asp73 and 134–141; that span reads TGNPFFTT. Thr161, Tyr167, and Asp170 together coordinate ATP.

Belongs to the UMP kinase family. In terms of assembly, homohexamer.

It is found in the cytoplasm. The enzyme catalyses UMP + ATP = UDP + ADP. The protein operates within pyrimidine metabolism; CTP biosynthesis via de novo pathway; UDP from UMP (UMPK route): step 1/1. Its activity is regulated as follows. Allosterically activated by GTP. Inhibited by UTP. In terms of biological role, catalyzes the reversible phosphorylation of UMP to UDP. The protein is Uridylate kinase of Campylobacter curvus (strain 525.92).